A 262-amino-acid chain; its full sequence is Glucosamine-6-phosphate deaminase (262 aa).

The active-site Proton acceptor; for enolization step is the D63. N129 acts as the For ring-opening step in catalysis. Catalysis depends on H131, which acts as the Proton acceptor; for ring-opening step. Catalysis depends on E136, which acts as the For ring-opening step.

The protein belongs to the glucosamine/galactosamine-6-phosphate isomerase family. NagB subfamily.

It carries out the reaction alpha-D-glucosamine 6-phosphate + H2O = beta-D-fructose 6-phosphate + NH4(+). It functions in the pathway amino-sugar metabolism; N-acetylneuraminate degradation; D-fructose 6-phosphate from N-acetylneuraminate: step 5/5. In terms of biological role, catalyzes the reversible isomerization-deamination of glucosamine 6-phosphate (GlcN6P) to form fructose 6-phosphate (Fru6P) and ammonium ion. The sequence is that of Glucosamine-6-phosphate deaminase from Bacillus cytotoxicus (strain DSM 22905 / CIP 110041 / 391-98 / NVH 391-98).